A 473-amino-acid polypeptide reads, in one-letter code: MATPARRIPRVRVRGIYATALTKLVIDMGFQVVQPSRIIADRFSLPMLTLPADVTIKDSDNNPSELLIVGYEWAVNIILEKLRDTLPYSFYWRSSLPLHSTVKARVIGLRDNRCIARVGDVEAELLVDRSECIEDREVVGGVVRPGVKPRETPRIVPGARVIGDYAILIESSEPRVTISEHVRSPEKRALLAAIATSFTEQGYAVHWRSSSQHAEREELEKHLRQLREALAEARKRAEEGPPGVYSEGEAVVLVHLSSADKQKLDEIRDSVVATIPYHHTVKSLQPSLSKVIDYAEKVKALGVDSEKLVRALLELVAEDLASRRRIRILHVKPSGEYIELGKAEIKSVYVEDKSLVIVLERTVKSRGVYDGLGVEKEPGDRIVTEVRTDEWIVKHTYYAPDGTVKGTYININTPPEIAEDAIVYLDLEIDIVKKPGKKPKIVDAEELDKYHEQGIVTTKLKEKALEIARKLAG.

The protein belongs to the FAU-1 family.

Functionally, probable RNase involved in rRNA stability through maturation and/or degradation of precursor rRNAs. Binds to RNA in loop regions with AU-rich sequences. The protein is Probable ribonuclease FAU-1 of Hyperthermus butylicus (strain DSM 5456 / JCM 9403 / PLM1-5).